The chain runs to 388 residues: F-box protein ETP2 (388 aa).

The F-box domain maps to 2-48 (KTIQEQLPNDLVEEILCRVPATSLRRLRSTCKAWNRLFKGDRILASK).

In terms of assembly, interacts with EIN2 (via C-terminus).

In terms of biological role, negative regulator of EIN2 protein stability. This Arabidopsis thaliana (Mouse-ear cress) protein is F-box protein ETP2.